The primary structure comprises 241 residues: Cobalt transport protein CbiM (241 aa).

The N-terminal stretch at 1 to 24 (MKKIKIISFSVAYLILLTPIYASA) is a signal peptide. 6 helical membrane-spanning segments follow: residues 30–50 (GFLPPLWAAIWSVISLPFIVG), 67–87 (LLLGLVGAFVFVLSALKLPSV), 99–119 (LGTIIFGPLPMAVIGLIVLIF), 131–151 (TLGANVFSMAIVGPFAGYFIF), 160–180 (SLAVFLAAMLADLITYIVTSL), and 202–222 (GIFAITQIPLAIGEGILTLIV).

Belongs to the CbiM family. As to quaternary structure, forms an energy-coupling factor (ECF) transporter complex composed of an ATP-binding protein (A component, CbiO), a transmembrane protein (T component, CbiQ) and 2 possible substrate-capture proteins (S components, CbiM and CbiN) of unknown stoichimetry.

The protein localises to the cell membrane. The protein operates within cofactor biosynthesis; adenosylcobalamin biosynthesis. Part of the energy-coupling factor (ECF) transporter complex CbiMNOQ involved in cobalt import. The polypeptide is Cobalt transport protein CbiM (Acetoanaerobium sticklandii (strain ATCC 12662 / DSM 519 / JCM 1433 / CCUG 9281 / NCIMB 10654 / HF) (Clostridium sticklandii)).